A 667-amino-acid polypeptide reads, in one-letter code: E3 ubiquitin-protein ligase RNF6 (667 aa).

Disordered regions lie at residues methionine 1–glutamine 25, lysine 75–serine 100, glycine 116–phenylalanine 216, phenylalanine 295–serine 355, glutamate 396–glutamate 419, glycine 507–methionine 532, and glutamate 537–arginine 556. Over residues alanine 79 to aspartate 90 the composition is skewed to low complexity. Residues glycine 116–serine 139 are compositionally biased toward polar residues. The span at isoleucine 150–aspartate 163 shows a compositional bias: basic and acidic residues. Residues serine 191–proline 200 are compositionally biased toward low complexity. A compositionally biased stretch (polar residues) spans serine 296–asparagine 327. Positions histidine 516–alanine 530 are enriched in low complexity. Serine 559 carries the phosphoserine modification. The segment at cysteine 614 to arginine 655 adopts an RING-type; atypical zinc-finger fold.

Belongs to the RNF12 family. As to expression, widely expressed with higher expression in the testis in both germ cells and Sertoli cells.

It is found in the nucleus. Its subcellular location is the cytoplasm. The protein localises to the cell projection. The protein resides in the axon. It localises to the PML body. The catalysed reaction is S-ubiquitinyl-[E2 ubiquitin-conjugating enzyme]-L-cysteine + [acceptor protein]-L-lysine = [E2 ubiquitin-conjugating enzyme]-L-cysteine + N(6)-ubiquitinyl-[acceptor protein]-L-lysine.. It participates in protein modification; protein ubiquitination. Functionally, E3 ubiquitin-protein ligase mediating 'Lys-48'-linked polyubiquitination of LIMK1 and its subsequent targeting to the proteasome for degradation. Negatively regulates axonal outgrowth through regulation of the LIMK1 turnover. Mediates 'Lys-6' and 'Lys-27'-linked polyubiquitination of AR/androgen receptor thereby modulating its transcriptional activity. May also bind DNA and function as a transcriptional regulator. Mediates polyubiquitination of QKI in macrophages, leading to its degradation. In Mus musculus (Mouse), this protein is E3 ubiquitin-protein ligase RNF6.